We begin with the raw amino-acid sequence, 409 residues long: Multifunctional CCA protein (409 aa).

The ATP site is built by Gly-8 and Arg-11. Gly-8 and Arg-11 together coordinate CTP. Positions 21 and 23 each coordinate Mg(2+). Residues Arg-91, Arg-137, and Arg-140 each coordinate ATP. CTP contacts are provided by Arg-91, Arg-137, and Arg-140. The region spanning 228–329 is the HD domain; the sequence is TGVHVLSVLE…LELLQSFDVY (102 aa).

The protein belongs to the tRNA nucleotidyltransferase/poly(A) polymerase family. Bacterial CCA-adding enzyme type 1 subfamily. As to quaternary structure, monomer. Can also form homodimers and oligomers. Mg(2+) is required as a cofactor. Ni(2+) serves as cofactor.

It carries out the reaction a tRNA precursor + 2 CTP + ATP = a tRNA with a 3' CCA end + 3 diphosphate. The catalysed reaction is a tRNA with a 3' CCA end + 2 CTP + ATP = a tRNA with a 3' CCACCA end + 3 diphosphate. Catalyzes the addition and repair of the essential 3'-terminal CCA sequence in tRNAs without using a nucleic acid template. Adds these three nucleotides in the order of C, C, and A to the tRNA nucleotide-73, using CTP and ATP as substrates and producing inorganic pyrophosphate. tRNA 3'-terminal CCA addition is required both for tRNA processing and repair. Also involved in tRNA surveillance by mediating tandem CCA addition to generate a CCACCA at the 3' terminus of unstable tRNAs. While stable tRNAs receive only 3'-terminal CCA, unstable tRNAs are marked with CCACCA and rapidly degraded. This is Multifunctional CCA protein from Pseudomonas savastanoi pv. phaseolicola (strain 1448A / Race 6) (Pseudomonas syringae pv. phaseolicola (strain 1448A / Race 6)).